Here is a 190-residue protein sequence, read N- to C-terminus: MSIKSDRWIRRMSEQHGMIEPFEAGQVKQANGERIVSYGTSSYGYDVRCSREFKVFTNINSTIVDPKHFDSGSFVDITADECIIPPNSFALARTVEYFRIPRDTLVVCLGKSTYARCGIIVNVTPLEPEWEGHVTLEFSNTTPLPARIYANEGVAQMLFFQAAADDICETSYRDRGGKYQGQTGVTLPRT.

DCTP is bound by residues 111 to 116 (KSTYAR), 135 to 137 (TLE), Gln156, Tyr172, and Gln182. Catalysis depends on Glu137, which acts as the Proton donor/acceptor.

It belongs to the dCTP deaminase family. In terms of assembly, homotrimer.

It catalyses the reaction dCTP + H2O + H(+) = dUTP + NH4(+). The protein operates within pyrimidine metabolism; dUMP biosynthesis; dUMP from dCTP (dUTP route): step 1/2. In terms of biological role, catalyzes the deamination of dCTP to dUTP. The polypeptide is dCTP deaminase (Stenotrophomonas maltophilia (strain K279a)).